The sequence spans 192 residues: Xanthine phosphoribosyltransferase (192 aa).

Leu20 and Asn27 together coordinate xanthine. 128 to 132 is a binding site for 5-phospho-alpha-D-ribose 1-diphosphate; that stretch reads ANGQA. Lys156 is a binding site for xanthine.

Belongs to the purine/pyrimidine phosphoribosyltransferase family. Xpt subfamily. As to quaternary structure, homodimer.

It is found in the cytoplasm. The catalysed reaction is XMP + diphosphate = xanthine + 5-phospho-alpha-D-ribose 1-diphosphate. The protein operates within purine metabolism; XMP biosynthesis via salvage pathway; XMP from xanthine: step 1/1. Functionally, converts the preformed base xanthine, a product of nucleic acid breakdown, to xanthosine 5'-monophosphate (XMP), so it can be reused for RNA or DNA synthesis. In Lacticaseibacillus casei (strain BL23) (Lactobacillus casei), this protein is Xanthine phosphoribosyltransferase.